A 101-amino-acid polypeptide reads, in one-letter code: Urease subunit beta (101 aa).

This sequence belongs to the urease beta subunit family. Heterotrimer of UreA (gamma), UreB (beta) and UreC (alpha) subunits. Three heterotrimers associate to form the active enzyme.

The protein localises to the cytoplasm. The enzyme catalyses urea + 2 H2O + H(+) = hydrogencarbonate + 2 NH4(+). Its pathway is nitrogen metabolism; urea degradation; CO(2) and NH(3) from urea (urease route): step 1/1. The protein is Urease subunit beta of Cereibacter sphaeroides (strain ATCC 17029 / ATH 2.4.9) (Rhodobacter sphaeroides).